The primary structure comprises 932 residues: RNA-binding protein 12 (932 aa).

A disordered region spans residues 96 to 116 (DIPPANASRSGPPPSSGMSSR). Positions 98–116 (PPANASRSGPPPSSGMSSR) are enriched in low complexity. An RRM 1 domain is found at 304-379 (LYVSVHGMPF…RYVEVSPATE (76 aa)). 2 positions are modified to phosphoserine: serine 352 and serine 375. Polar residues-rich tracts occupy residues 392–401 (KQNMGPSGQT) and 408–417 (LPRSKSPSGQ). The tract at residues 392 to 424 (KQNMGPSGQTHPPPQTLPRSKSPSGQKRSRSRS) is disordered. Phosphoserine occurs at positions 420, 422, and 424. In terms of domain architecture, RRM 2 spans 430–507 (FCVYLKGLPF…RFIQVHPITK (78 aa)). At serine 525 the chain carries Phosphoserine. The segment covering 717–734 (NGPPFNFPGNFGGSNAFG) has biased composition (low complexity). The interval 717-853 (NGPPFNFPGN…PGFASSSGKP (137 aa)) is disordered. Gly residues predominate over residues 783-811 (SGFGGGPQNFGNGPGSLGGPPGFGSGPPG). Residues 824-836 (AFGPGPGPGPGPG) are compositionally biased toward pro residues. Positions 856–932 (TVIKVQNMPF…GSRKVKLVLG (77 aa)) constitute an RRM 3 domain.

Its subcellular location is the nucleus. This Homo sapiens (Human) protein is RNA-binding protein 12 (RBM12).